The following is a 702-amino-acid chain: Acetylcholinesterase (702 aa).

An N-terminal signal peptide occupies residues 1–36; it reads MEIRGLITRLLGPCHLRHLILCSLGLYSILVQSVHC. A disordered region spans residues 107–134; sequence HIHSTTTRRRGLTRRESSSDATDSDPLV. Asn-187 carries N-linked (GlcNAc...) asparagine glycosylation. A disulfide bridge connects residues Cys-195 and Cys-222. Ser-327 acts as the Acyl-ester intermediate in catalysis. An intrachain disulfide couples Cys-381 to Cys-394. Catalysis depends on charge relay system residues Glu-453 and His-567. Cys-529 and Cys-650 are joined by a disulfide. Residue Asn-637 is glycosylated (N-linked (GlcNAc...) asparagine).

This sequence belongs to the type-B carboxylesterase/lipase family.

Its subcellular location is the synapse. The protein resides in the secreted. It is found in the cell membrane. It catalyses the reaction acetylcholine + H2O = choline + acetate + H(+). Functionally, rapidly hydrolyzes choline released into the synapse. In Culex pipiens (House mosquito), this protein is Acetylcholinesterase (ACHE1).